Reading from the N-terminus, the 316-residue chain is Olfactory receptor 2G6 (316 aa).

Over Met1–Arg25 the chain is Extracellular. Residues Asn5 and Asn6 are each glycosylated (N-linked (GlcNAc...) asparagine). Residues Phe26–Cys49 traverse the membrane as a helical segment. At Cys50–Thr57 the chain is on the cytoplasmic side. A helical membrane pass occupies residues Pro58–Pro79. Topologically, residues Gln80–Gln100 are extracellular. Cys97 and Cys189 are joined by a disulfide. The chain crosses the membrane as a helical span at residues Leu101–Tyr120. At Asp121–Arg139 the chain is on the cytoplasmic side. A helical membrane pass occupies residues Phe140–Ile158. Over Gln159 to Asn195 the chain is Extracellular. Residues Glu196 to Gly219 form a helical membrane-spanning segment. Over Phe220–Lys236 the chain is Cytoplasmic. Residues Ala237 to Tyr259 form a helical membrane-spanning segment. The Extracellular portion of the chain corresponds to Leu260 to Lys272. Residues Phe273 to Leu292 traverse the membrane as a helical segment. At Arg293–Asp316 the chain is on the cytoplasmic side.

The protein belongs to the G-protein coupled receptor 1 family.

It localises to the cell membrane. Functionally, odorant receptor. This chain is Olfactory receptor 2G6 (OR2G6), found in Homo sapiens (Human).